The chain runs to 140 residues: Small ribosomal subunit protein uS12m (140 aa).

It belongs to the universal ribosomal protein uS12 family.

Its subcellular location is the mitochondrion. This is Small ribosomal subunit protein uS12m (mrps12) from Dictyostelium citrinum (Slime mold).